We begin with the raw amino-acid sequence, 325 residues long: Hydroxylase/desaturase poxK (325 aa).

Low complexity predominate over residues 1–12 (MTATATPVPTVA). A disordered region spans residues 1–25 (MTATATPVPTVASHAQDITLPPPPK).

The protein belongs to the asaB hydroxylase/desaturase family.

It functions in the pathway secondary metabolite biosynthesis. Functionally, hydroxylase/desaturase; part of the gene cluster that mediates the biosynthesis of oxaleimides, cytotoxic compounds containing an unusual disubstituted succinimide moiety. The first step of the pathway is provided by the HR-PKS poxF that serves in a new mode of collaborative biosynthesis with the PKS-NRPS poxE, by providing the olefin containing amino acid substrate via the synthesis of an ACP-bound dec-4-enoate. The cytochrome P450 monooxygenase poxM-catalyzed oxidation at the alpha-position creates the enzyme-bound 2-hydroxydec-4-enoyl-ACP thioester, which may be prone to spontaneous hydrolysis to yield 2-hydroxydec-4-enoic acid due to increased electrophilicity of the carbonyl. 2-hydroxydec-4-enoic acid can then be further oxidized by poxM to yield the alpha-ketoacid 2-oxodec-4-enoicacid, which is reductively aminated by the aminotransferase poxL to yield (S,E)-2-aminodec-4-enoic acid. The Hybrid PKS-NRPS synthetase poxE then performs condensation between the octaketide product of its PKS modules and the amino group of (S,E)-2-aminodec-4-enoic acid which is activated and incorporated by the adenylation domain. The resulting aminoacyl product can be cyclized by the Diels-Alderase PoxQ and reductively released by the reductive (R) domain of poxE to yield an aldehyde intermediate. The released aldehyde is then substrate for a Knoevenagel condensation by the hydrolyase poxO followed by an oxidation at the 5-position of the pyrrolidone ring. The presence of the olefin from the amino acid building block allows for migration of the substituted allyl group to occur. This allylic transposition reaction takes place in a conjugate addition, semipinacol-like fashion to yield a succinimide intermediate. Iterative two-electron oxidations of the C7 methyl of the succinimide intermediate to the carboxylic acid can be catalyzed by one of two remaining cytochrome P450 monooxygenasess poxC or poxD to yield oxaleimide A. Subsequent oxidation yields the maleimide scaffold oxaleimide I. Both oxaleimide A and oxaleimide I can undergo oxidative modifications in the decalin ring to yield the series of products oxaleimides B to H. The polypeptide is Hydroxylase/desaturase poxK (Penicillium oxalicum).